A 74-amino-acid polypeptide reads, in one-letter code: Conotoxin AbVIL (74 aa).

An N-terminal signal peptide occupies residues 1-17 (VLIIAVLFLTACQLTTA). The interval 17-41 (AETSSRGEQKHRAPRSTDKNSRMTK) is disordered. The propeptide occupies 18 to 40 (ETSSRGEQKHRAPRSTDKNSRMT). Positions 21 to 37 (SRGEQKHRAPRSTDKNS) are enriched in basic and acidic residues. Intrachain disulfides connect C43–C57, C50–C61, and C56–C68.

The protein belongs to the conotoxin O1 superfamily. Expressed by the venom duct.

Its subcellular location is the secreted. The chain is Conotoxin AbVIL from Conus abbreviatus (Abbreviated cone).